We begin with the raw amino-acid sequence, 223 residues long: Glycoprotein 42 (223 aa).

The Intravirion portion of the chain corresponds to 1–8 (MVSFKQVR). Residues 9–29 (VPLFTAIALVIVLLLAYFLPP) traverse the membrane as a helical segment. Residues 30–223 (RVRGGGRVAA…CLCVSQRSNS (194 aa)) are Virion surface-facing. 5 cysteine pairs are disulfide-bonded: cysteine 99–cysteine 138, cysteine 102–cysteine 115, cysteine 128–cysteine 214, cysteine 132–cysteine 216, and cysteine 192–cysteine 208. Residues 111 to 217 (YKGCCFYFTK…CSFLKPCLCV (107 aa)) form the C-type lectin domain.

The protein belongs to the epstein barr virus gp42 family. As to quaternary structure, forms a complex with gp25 and gp85 via its N-terminus; this complex is used for invasion of B-lymphocytes. Interacts with human HLA-DRA and HLA-DRB1.

Its subcellular location is the virion membrane. The protein resides in the host membrane. In terms of biological role, plays a role in virion attachment to host B-lymphocytes, through binding to leukocyte antigen (HLA) class II and subsequently participates in fusion of the virion with host membranes. May act as a tropism switch that directs fusion with B-lymphocytes and inhibits fusion with epithelial cells. Additionally, hampers T-cell recognition via HLA class II molecules through steric hindrance of T-cell receptor-class II-peptide interaction. Soluble gp42 inhibits HLA class II-restricted antigen presentation to T-cells through binding to immature and mature HLA class II complexes. The protein is Glycoprotein 42 of Epstein-Barr virus (strain B95-8) (HHV-4).